The sequence spans 493 residues: Alpha-amylase-related protein (493 aa).

A signal peptide spans 1 to 19; that stretch reads MFKFALTLTLCLAGSLSLA. Q20 is modified (pyrrolidone carboxylic acid). C47 and C103 are joined by a disulfide. Residues N117, Q168, and D177 each contribute to the Ca(2+) site. The cysteines at positions 156 and 170 are disulfide-linked. A chloride-binding site is contributed by R205. Residue D207 is the Nucleophile of the active site. H211 contacts Ca(2+). Catalysis depends on E244, which acts as the Proton donor. Chloride is bound by residues N307 and R342. 3 disulfide bridges follow: C375/C381, C417/C440, and C447/C459.

The protein belongs to the glycosyl hydrolase 13 family. Monomer. The cofactor is Ca(2+). Requires chloride as cofactor. As to expression, midgut and fat body.

The protein localises to the secreted. The catalysed reaction is Endohydrolysis of (1-&gt;4)-alpha-D-glucosidic linkages in polysaccharides containing three or more (1-&gt;4)-alpha-linked D-glucose units.. The sequence is that of Alpha-amylase-related protein (Amyrel) from Drosophila melanogaster (Fruit fly).